Reading from the N-terminus, the 338-residue chain is tRNA dimethylallyltransferase (338 aa).

13-20 contributes to the ATP binding site; that stretch reads GPTASGKT. Position 15-20 (15-20) interacts with substrate; that stretch reads TASGKT. 2 interaction with substrate tRNA regions span residues 38–41 and 162–166; these read DSTL and QRVSR.

The protein belongs to the IPP transferase family. In terms of assembly, monomer. Mg(2+) is required as a cofactor.

The catalysed reaction is adenosine(37) in tRNA + dimethylallyl diphosphate = N(6)-dimethylallyladenosine(37) in tRNA + diphosphate. In terms of biological role, catalyzes the transfer of a dimethylallyl group onto the adenine at position 37 in tRNAs that read codons beginning with uridine, leading to the formation of N6-(dimethylallyl)adenosine (i(6)A). The protein is tRNA dimethylallyltransferase of Cellvibrio japonicus (strain Ueda107) (Pseudomonas fluorescens subsp. cellulosa).